Here is a 91-residue protein sequence, read N- to C-terminus: Small ribosomal subunit protein uS15 (91 aa).

The protein belongs to the universal ribosomal protein uS15 family. In terms of assembly, part of the 30S ribosomal subunit. Forms a bridge to the 50S subunit in the 70S ribosome, contacting the 23S rRNA.

Functionally, one of the primary rRNA binding proteins, it binds directly to 16S rRNA where it helps nucleate assembly of the platform of the 30S subunit by binding and bridging several RNA helices of the 16S rRNA. In terms of biological role, forms an intersubunit bridge (bridge B4) with the 23S rRNA of the 50S subunit in the ribosome. The protein is Small ribosomal subunit protein uS15 of Hydrogenobaculum sp. (strain Y04AAS1).